A 287-amino-acid polypeptide reads, in one-letter code: Elongation factor Ts (287 aa).

The tract at residues 80–83 (TDFL) is involved in Mg(2+) ion dislocation from EF-Tu.

This sequence belongs to the EF-Ts family.

The protein resides in the cytoplasm. Its function is as follows. Associates with the EF-Tu.GDP complex and induces the exchange of GDP to GTP. It remains bound to the aminoacyl-tRNA.EF-Tu.GTP complex up to the GTP hydrolysis stage on the ribosome. In Pseudomonas syringae pv. tomato (strain ATCC BAA-871 / DC3000), this protein is Elongation factor Ts.